Here is a 379-residue protein sequence, read N- to C-terminus: Proton extrusion protein PxcA (379 aa).

The next 4 membrane-spanning stretches (helical) occupy residues 153 to 173 (TLVSLRILLLMILVPLLLQQI), 254 to 274 (AIKNVLADVVATIGFVLVCLF), 300 to 320 (FVIILFTDIFVGFHSPEGWTV), and 337 to 357 (FIDLFIATFPVILATIFKYWI).

It belongs to the CemA family.

The protein localises to the cell inner membrane. Its function is as follows. Required for H(+) efflux immediately after light irradiation to form a rapid H(+) concentration gradient across the thylakoid membranes. Together with PxcL, contributes to transient H(+) uptake following dark to light transition. In Synechococcus sp. (strain RCC307), this protein is Proton extrusion protein PxcA.